We begin with the raw amino-acid sequence, 438 residues long: V-type ATP synthase beta chain (438 aa).

The protein belongs to the ATPase alpha/beta chains family.

Produces ATP from ADP in the presence of a proton gradient across the membrane. The V-type beta chain is a regulatory subunit. This is V-type ATP synthase beta chain (atpB) from Chlamydia pneumoniae (Chlamydophila pneumoniae).